Here is a 157-residue protein sequence, read N- to C-terminus: XylDLEGF operon transcriptional activator 2 (157 aa).

Positions 39-140 constitute an HTH araC/xylS-type domain; sequence ERVVQFIEEN…GELPSDTLSL (102 aa). DNA-binding regions (H-T-H motif) lie at residues 56 to 77 and 107 to 130; these read EQLA…EKHT and ITEV…RSTF.

The protein localises to the cytoplasm. Functionally, regulatory protein of the TOL plasmid xyl operons. XylS activates the xylXYZLTEGFJQKIH operon required for the degradation of toluene, m-xylene and p-xylene. In Pseudomonas putida (Arthrobacter siderocapsulatus), this protein is XylDLEGF operon transcriptional activator 2 (xylS2).